The chain runs to 567 residues: Dihydroxy-acid dehydratase 3 (567 aa).

Residue C57 coordinates [2Fe-2S] cluster. Mg(2+) is bound at residue D89. Residue C130 coordinates [2Fe-2S] cluster. D131 and K132 together coordinate Mg(2+). Residue K132 is modified to N6-carboxylysine. C202 contributes to the [2Fe-2S] cluster binding site. E454 is a Mg(2+) binding site. S480 serves as the catalytic Proton acceptor.

It belongs to the IlvD/Edd family. In terms of assembly, homodimer. The cofactor is [2Fe-2S] cluster. Requires Mg(2+) as cofactor.

It catalyses the reaction (2R)-2,3-dihydroxy-3-methylbutanoate = 3-methyl-2-oxobutanoate + H2O. The enzyme catalyses (2R,3R)-2,3-dihydroxy-3-methylpentanoate = (S)-3-methyl-2-oxopentanoate + H2O. It participates in amino-acid biosynthesis; L-isoleucine biosynthesis; L-isoleucine from 2-oxobutanoate: step 3/4. It functions in the pathway amino-acid biosynthesis; L-valine biosynthesis; L-valine from pyruvate: step 3/4. In terms of biological role, functions in the biosynthesis of branched-chain amino acids. Catalyzes the dehydration of (2R,3R)-2,3-dihydroxy-3-methylpentanoate (2,3-dihydroxy-3-methylvalerate) into 2-oxo-3-methylpentanoate (2-oxo-3-methylvalerate) and of (2R)-2,3-dihydroxy-3-methylbutanoate (2,3-dihydroxyisovalerate) into 2-oxo-3-methylbutanoate (2-oxoisovalerate), the penultimate precursor to L-isoleucine and L-valine, respectively. The chain is Dihydroxy-acid dehydratase 3 from Aromatoleum aromaticum (strain DSM 19018 / LMG 30748 / EbN1) (Azoarcus sp. (strain EbN1)).